Here is a 79-residue protein sequence, read N- to C-terminus: uncharacterized protein (79 aa).

Positions 1 to 33 (MRFIIRTVMLIALVWIGLLLSGYGVLIGSKENA) are cleaved as a signal peptide.

This is an uncharacterized protein from Shigella flexneri.